Consider the following 162-residue polypeptide: NADH-quinone oxidoreductase subunit I (162 aa).

4Fe-4S ferredoxin-type domains lie at 54–83 (RRYENGEERCIACKLCEAVCPALAITIESE) and 93–122 (TRYDIDLTKCIFCGFCEESCPVDSIVETQI). The [4Fe-4S] cluster site is built by Cys-63, Cys-66, Cys-69, Cys-73, Cys-102, Cys-105, Cys-108, and Cys-112.

The protein belongs to the complex I 23 kDa subunit family. As to quaternary structure, NDH-1 is composed of 14 different subunits. Subunits NuoA, H, J, K, L, M, N constitute the membrane sector of the complex. [4Fe-4S] cluster is required as a cofactor.

It is found in the cell inner membrane. It catalyses the reaction a quinone + NADH + 5 H(+)(in) = a quinol + NAD(+) + 4 H(+)(out). In terms of biological role, NDH-1 shuttles electrons from NADH, via FMN and iron-sulfur (Fe-S) centers, to quinones in the respiratory chain. The immediate electron acceptor for the enzyme in this species is believed to be ubiquinone. Couples the redox reaction to proton translocation (for every two electrons transferred, four hydrogen ions are translocated across the cytoplasmic membrane), and thus conserves the redox energy in a proton gradient. The chain is NADH-quinone oxidoreductase subunit I from Burkholderia ambifaria (strain MC40-6).